The chain runs to 263 residues: Glutamate racemase (263 aa).

Residues 13–14 (DS) and 45–46 (YG) each bind substrate. Cys-77 (proton donor/acceptor) is an active-site residue. 78 to 79 (NT) serves as a coordination point for substrate. Residue Cys-185 is the Proton donor/acceptor of the active site. Residue 186–187 (TH) coordinates substrate.

Belongs to the aspartate/glutamate racemases family.

It catalyses the reaction L-glutamate = D-glutamate. The protein operates within cell wall biogenesis; peptidoglycan biosynthesis. Functionally, provides the (R)-glutamate required for cell wall biosynthesis. This Vibrio vulnificus (strain YJ016) protein is Glutamate racemase.